A 173-amino-acid chain; its full sequence is ATP-dependent protease subunit HslV (173 aa).

Residue Thr-2 is part of the active site. Residues Gly-158, Asp-161, and Ser-164 each contribute to the Na(+) site.

Belongs to the peptidase T1B family. HslV subfamily. In terms of assembly, a double ring-shaped homohexamer of HslV is capped on each side by a ring-shaped HslU homohexamer. The assembly of the HslU/HslV complex is dependent on binding of ATP.

The protein resides in the cytoplasm. It carries out the reaction ATP-dependent cleavage of peptide bonds with broad specificity.. Allosterically activated by HslU binding. Functionally, protease subunit of a proteasome-like degradation complex believed to be a general protein degrading machinery. In Actinobacillus pleuropneumoniae serotype 5b (strain L20), this protein is ATP-dependent protease subunit HslV.